The following is a 217-amino-acid chain: Growth factor receptor-bound protein 2 (217 aa).

The residue at position 1 (Met1) is an N-acetylmethionine. The SH3 1 domain maps to 1–58; sequence MEAIAKYDFKATADDELSFKRGDILKVLNEECDQNWYKAELNGKDGFIPKNYIEMKPH. Residues Lys6, Lys50, and Lys109 each carry the N6-acetyllysine modification. The SH2 domain maps to 60–152; sequence WFFGKIPRAK…NQQIFLRDIE (93 aa). A Glycyl lysine isopeptide (Lys-Gly) (interchain with G-Cter in ubiquitin) cross-link involves residue Lys109. In terms of domain architecture, SH3 2 spans 156-215; that stretch reads QQPTYVQALFDFDPQEDGELGFRRGDFIHVMDNSDPNWWKGACHGQTGMFPRNYVTPVNR. Residue Tyr209 is modified to Phosphotyrosine. Thr211 is subject to Phosphothreonine.

It belongs to the GRB2/sem-5/DRK family. In terms of assembly, associates (via SH2 domain) with activated EGF and PDGF receptors (tyrosine phosphorylated). Interacts with PDGFRA (tyrosine phosphorylated); the interaction may be indirect. Interacts with IRS4 (when Tyr-phosphorylated). Also associates to other cellular Tyr-phosphorylated proteins such as SIT1, IRS1, IRS2, SHC and LNK; probably via the concerted action of both its SH2 and SH3 domains. It also seems to interact with RAS in the signaling pathway leading to DNA synthesis. Interacts with SOS1. Forms a complex with MUC1 and SOS1, through interaction of the SH3 domains with SOS1 and the SH2 domain with phosphorylated MUC1. Interacts with phosphorylated MET. Interacts with phosphorylated TOM1L1. Interacts with the phosphorylated C-terminus of SH2B2. Interacts with phosphorylated SIT1, LAX1, LAT, LAT2 and LIME1 upon TCR and/or BCR activation. Interacts with NISCH, PTPNS1 and REPS2. Interacts with syntrophin SNTA1. Interacts (via SH3 domains) with REPS1. Interacts (via SH3 domains) with PIK3C2B. Interacts with CBL and CBLB. Interacts with AJUBA and CLNK. Interacts (via SH2 domain) with TEK/TIE2 (tyrosine phosphorylated). Interacts with SHB, INPP5D/SHIP1, SKAP1 and SKAP2. Interacts with PTPN11. Interacts with PRNP. Interacts with RALGPS1. Also interacts with HCST. Interacts with KDR. Interacts with FLT1 (tyrosine-phosphorylated). Interacts with GAPT and PTPRE. Interacts (via SH2 domain) with KIF26A. Interacts (via SH3 2) with GAB2. Interacts with ADAM15. Interacts with THEMIS2. Interacts (via SH2 domain) with AXL (phosphorylated). Interacts (via SH2 domain) with KIT (phosphorylated). Interacts with PTPRJ and BCR. Interacts with PTPN23. Interacts with FLT4 (tyrosine phosphorylated). Interacts with EPHB1 and SHC1; activates the MAPK/ERK cascade to regulate cell migration. Part of a complex including TNK2, GRB2 and one receptor tyrosine kinase (RTK) such as AXL and PDGFRL, in which GRB2 promotes RTK recruitment by TNK2. Interacts (via SH2 domain) with CSF1R (tyrosine phosphorylated). Interacts with ERBB4. Interacts with NTRK1 (phosphorylated upon ligand-binding). Interacts with PTK2/FAK1 (tyrosine phosphorylated). Interacts with PTK2B/PYK2 (tyrosine phosphorylated). Interacts (via SH2-domain) with SCIMP; this interaction is dependent on phosphorylation of SCIMP 'Tyr-58'. Interacts (via SH3 domains) with GAREM1 (via proline-rich domain and tyrosine phosphorylated); the interaction occurs upon EGF stimulation. Interacts with DAB2. Interacts with TESPA1. Interacts with THEMIS. Interacts with PLCG1, LAT and THEMIS upon TCR activation in thymocytes; the association is weaker in the absence of TESPA1. Interacts with CD28. Interacts with RAB13; may recruit RAB13 to the leading edge of migrating endothelial cells where it can activate RHOA. Interacts with ASAP3 (phosphorylated form). Interacts (via SH2 domain) with PTPRH (phosphorylated form). Interacts with PTPRO (phosphorylated form). Interacts with PTPRB (phosphorylated form). Interacts (via SH3 domain 2) with PRR14 (via proline-rich region). Interacts with DENND2B. Interacts with SPRY2. Interacts with LRRC8A. Interacts with PEAK1. Interacts with FCRL1. Interacts with PCNA. Interacts with CD19. Interacts with BECN1. Interacts with RAD51; the interaction inhibits RAD51 ATPase to stabilize RAD51-DNA complex at stalled replication forks. Interacts with MRE11; this interaction recruits MRE11 to the DNA damage sites. Interacts with RIPK1 ans SQSTM1; these interactions play a critical role in regulating programmed necrosis. Interacts with AGO2; this interaction is important for the formation of a ternary complex containing GRB2, AGO2 and DICER1. Interacts with TIGIT; this interaction inhibits PI3K and MAPK signaling cascades. Interacts with CD226; this interaction leads to activation of VAV1, PI3K and PLCG1. As to quaternary structure, interacts with SOS1; this interaction competes with GRB2 to bind SOS1 via its N-terminal SH3 domain. Phosphorylation of Tyr-209 in the C-terminal SH3 domain reduces its binding to SOS1. In terms of processing, ubiquitinated by RNF173, leading to proteasomal degradation and inhibition of the RAF/MEK/ERK pathway. In the nucleus, polyubiquitinated by RBBP6 at Lys-109 at DNA damage sites. As to expression, expressed in macrophages.

It is found in the nucleus. The protein resides in the cytoplasm. It localises to the endosome. The protein localises to the golgi apparatus. Functionally, non-enzymatic adapter protein that plays a pivotal role in precisely regulated signaling cascades from cell surface receptors to cellular responses, including signaling transduction and gene expression. Thus, participates in many biological processes including regulation of innate and adaptive immunity, autophagy, DNA repair or necroptosis. Controls signaling complexes at the T-cell antigen receptor to facilitate the activation, differentiation, and function of T-cells. Mechanistically, engagement of the TCR leads to phosphorylation of the adapter protein LAT, which serves as docking site for GRB2. In turn, GRB2 establishes a a connection with SOS1 that acts as a guanine nucleotide exchange factor and serves as a critical regulator of KRAS/RAF1 leading to MAPKs translocation to the nucleus and activation. Also functions a role in B-cell activation by amplifying Ca(2+) mobilization and activation of the ERK MAP kinase pathway upon recruitment to the phosphorylated B-cell antigen receptor (BCR). Plays a role in switching between autophagy and programmed necrosis upstream of EGFR by interacting with components of necrosomes including RIPK1 and with autophagy regulators SQSTM1 and BECN1. Regulates miRNA biogenesis by forming a functional ternary complex with AGO2 and DICER1. Functions in the replication stress response by protecting DNA at stalled replication forks from MRE11-mediated degradation. Mechanistically, inhibits RAD51 ATPase activity to stabilize RAD51 on stalled replication forks. Additionally, directly recruits and later releases MRE11 at DNA damage sites during the homology-directed repair (HDR) process. Does not bind to phosphorylated epidermal growth factor receptor (EGFR) but inhibits EGF-induced transactivation of a RAS-responsive element. Acts as a dominant negative protein over GRB2 and by suppressing proliferative signals, may trigger active programmed cell death. Mechanistically, inhibits RAS-ERK signaling and downstream cell proliferation by competing with GRB2 for SOS1 binding and thus by regulating SOS1 membrane recruitment. The sequence is that of Growth factor receptor-bound protein 2 (Grb2) from Mus musculus (Mouse).